We begin with the raw amino-acid sequence, 1771 residues long: Myosin-H heavy chain (1771 aa).

Positions 7–57 (CGKEKVWVPNPEKGWINGDLIKEIPGEGWLVRDENGKEIKIEKDELRMQNP) constitute a Myosin N-terminal SH3-like domain. The Myosin motor domain maps to 61–840 (EGIDDMTSLS…IIANLELLRS (780 aa)). Residue 154–161 (GESGAGKT) coordinates ATP. An actin-binding region spans residues 690–712 (LNSLMTTINSTNPHYIRCIKPNT). 3 consecutive IQ domains span residues 843–872 (MINS…SSIY), 866–895 (TKHS…ENSA), and 940–969 (RIKK…EAKS). Disordered regions lie at residues 1070 to 1176 (EKQH…NNVD), 1218 to 1282 (VKKS…PINM), and 1312 to 1343 (LNNG…KHIQ). Residues 1077 to 1111 (YKNNEVVGNTSFEGSTTTNNGVTSPPKSSPASPIR) are compositionally biased toward polar residues. Residues 1112 to 1139 (NSINSNSDTTISGSSDDSIDNTDSLILS) are compositionally biased toward low complexity. The span at 1143-1153 (HKGEDRKRNHE) shows a compositional bias: basic and acidic residues. Residues 1180–1224 (RRQFNELEKEYKELKQMDETHKQYIESLKLQITQLEEKVKKSSSH) adopt a coiled-coil conformation. Residues 1253 to 1281 (NSSSHHQQQQQQHNISPSNSITSTTSPIN) are compositionally biased toward low complexity. The 269-residue stretch at 1427–1695 (TGVLDPIETN…LTSLMDSPKY (269 aa)) folds into the Dilute domain.

Belongs to the TRAFAC class myosin-kinesin ATPase superfamily. Myosin family. In terms of assembly, myosin I heavy chain is single-headed. Dimer of a heavy and a light chain. Inability to self-assemble into filaments.

Its function is as follows. Myosin is a protein that binds to actin and has ATPase activity that is activated by actin. In Dictyostelium discoideum (Social amoeba), this protein is Myosin-H heavy chain (myoH).